A 107-amino-acid polypeptide reads, in one-letter code: uncharacterized protein (107 aa).

A compositionally biased stretch (polar residues) spans 80–98; the sequence is SIDNLKPTSHQNGTTNDTA. Positions 80–107 are disordered; it reads SIDNLKPTSHQNGTTNDTATMDHLEKNE.

This is an uncharacterized protein from Human spumaretrovirus (SFVcpz(hu)).